We begin with the raw amino-acid sequence, 207 residues long: Guanylate kinase (207 aa).

The 181-residue stretch at 4 to 184 (GTLYIVSAPS…ALLDLKTIIR (181 aa)) folds into the Guanylate kinase-like domain. 11–18 (APSGAGKS) provides a ligand contact to ATP.

This sequence belongs to the guanylate kinase family.

The protein resides in the cytoplasm. The enzyme catalyses GMP + ATP = GDP + ADP. Functionally, essential for recycling GMP and indirectly, cGMP. The protein is Guanylate kinase of Sodalis glossinidius (strain morsitans).